We begin with the raw amino-acid sequence, 533 residues long: Tryptophan N-monooxygenase CYP79A68 (533 aa).

Residues 12-32 (VTPPISLSLAFIIFMFLVKFI) traverse the membrane as a helical segment. N-linked (GlcNAc...) asparagine glycosylation occurs at Asn-209. Heme is bound at residue Cys-471.

It belongs to the cytochrome P450 family. Heme is required as a cofactor. In terms of tissue distribution, confined to buds.

The protein localises to the membrane. It carries out the reaction L-tryptophan + 2 reduced [NADPH--hemoprotein reductase] + 2 O2 = (E)-(indol-3-yl)acetaldehyde oxime + 2 oxidized [NADPH--hemoprotein reductase] + CO2 + 3 H2O + 2 H(+). In terms of biological role, catalyzes with low efficiency E and Z isomers of indole-3-acetaldoxime from tryptophan (Trp). The chain is Tryptophan N-monooxygenase CYP79A68 from Prunus mume (Japanese apricot).